The primary structure comprises 217 residues: Uracil-DNA glycosylase (217 aa).

Catalysis depends on aspartate 62, which acts as the Proton acceptor.

It belongs to the uracil-DNA glycosylase (UDG) superfamily. UNG family.

Its subcellular location is the cytoplasm. It catalyses the reaction Hydrolyzes single-stranded DNA or mismatched double-stranded DNA and polynucleotides, releasing free uracil.. Excises uracil residues from the DNA which can arise as a result of misincorporation of dUMP residues by DNA polymerase or due to deamination of cytosine. The chain is Uracil-DNA glycosylase from Streptococcus suis (strain 98HAH33).